The chain runs to 82 residues: MSKPANNLQDIFLNGARKNRIPVIVYLTNGFQIRGIVKGFDNFTVILECDGKQMMVYKHALSTITPSKAILFNTPAGTDDRS.

A Sm domain is found at 10 to 70 (DIFLNGARKN…LSTITPSKAI (61 aa)).

Belongs to the Hfq family. As to quaternary structure, homohexamer.

RNA chaperone that binds small regulatory RNA (sRNAs) and mRNAs to facilitate mRNA translational regulation in response to envelope stress, environmental stress and changes in metabolite concentrations. Also binds with high specificity to tRNAs. This chain is RNA-binding protein Hfq, found in Clostridium kluyveri (strain NBRC 12016).